Here is a 151-residue protein sequence, read N- to C-terminus: Small ribosomal subunit protein uS13 (151 aa).

The protein belongs to the universal ribosomal protein uS13 family. Part of the 30S ribosomal subunit. Forms a loose heterodimer with protein S19. Forms two bridges to the 50S subunit in the 70S ribosome.

In terms of biological role, located at the top of the head of the 30S subunit, it contacts several helices of the 16S rRNA. In the 70S ribosome it contacts the 23S rRNA (bridge B1a) and protein L5 of the 50S subunit (bridge B1b), connecting the 2 subunits; these bridges are implicated in subunit movement. This chain is Small ribosomal subunit protein uS13, found in Hyperthermus butylicus (strain DSM 5456 / JCM 9403 / PLM1-5).